Consider the following 101-residue polypeptide: Small ribosomal subunit protein uS14 (101 aa).

The protein belongs to the universal ribosomal protein uS14 family. Part of the 30S ribosomal subunit. Contacts proteins S3 and S10.

In terms of biological role, binds 16S rRNA, required for the assembly of 30S particles and may also be responsible for determining the conformation of the 16S rRNA at the A site. This Cellvibrio japonicus (strain Ueda107) (Pseudomonas fluorescens subsp. cellulosa) protein is Small ribosomal subunit protein uS14.